The sequence spans 233 residues: Small ribosomal subunit protein uS2 (233 aa).

It belongs to the universal ribosomal protein uS2 family.

The protein is Small ribosomal subunit protein uS2 of Bacillus anthracis.